The chain runs to 60 residues: Phycobilisome degradation protein NblA homolog 2 (60 aa).

To Synechococcus PCC 7942 NblA and some, to chloroplast ycf18.

The protein is Phycobilisome degradation protein NblA homolog 2 of Synechocystis sp. (strain ATCC 27184 / PCC 6803 / Kazusa).